A 430-amino-acid polypeptide reads, in one-letter code: N-acylneuraminate cytidylyltransferase A (430 aa).

A disordered region spans residues 1–29 (MDAVNENGKRAMKDDSHGNSTSPKRRKSR). Positions 7-17 (NGKRAMKDDSH) are enriched in basic and acidic residues. The Bipartite nuclear localization signal signature appears at 9–27 (KRAMKDDSHGNSTSPKRRK). R38, N48, R97, S106, S108, and Q129 together coordinate substrate. R187 is an active-site residue.

This sequence belongs to the CMP-NeuNAc synthase family. In terms of assembly, homotetramer.

It localises to the nucleus. The catalysed reaction is an N-acylneuraminate + CTP = a CMP-N-acyl-beta-neuraminate + diphosphate. It functions in the pathway amino-sugar metabolism; N-acetylneuraminate metabolism. Its function is as follows. Catalyzes the activation of N-acetylneuraminic acid (NeuNAc) to cytidine 5'-monophosphate N-acetylneuraminic acid (CMP-NeuNAc), a substrate required for the addition of sialic acid. Also has activity towards N-glycolylneuraminic acid (Neu5Gc). Has weak activity towards 2-keto-3-deoxy-D-glycero-D-galacto-nononic acid (KDN). The protein is N-acylneuraminate cytidylyltransferase A of Danio rerio (Zebrafish).